The following is a 357-amino-acid chain: Chorismate synthase (357 aa).

NADP(+) is bound at residue arginine 47. FMN is bound by residues arginine 123–serine 125, glycine 281, lysine 296–serine 300, and arginine 324.

This sequence belongs to the chorismate synthase family. As to quaternary structure, homotetramer. FMNH2 is required as a cofactor.

It catalyses the reaction 5-O-(1-carboxyvinyl)-3-phosphoshikimate = chorismate + phosphate. The protein operates within metabolic intermediate biosynthesis; chorismate biosynthesis; chorismate from D-erythrose 4-phosphate and phosphoenolpyruvate: step 7/7. In terms of biological role, catalyzes the anti-1,4-elimination of the C-3 phosphate and the C-6 proR hydrogen from 5-enolpyruvylshikimate-3-phosphate (EPSP) to yield chorismate, which is the branch point compound that serves as the starting substrate for the three terminal pathways of aromatic amino acid biosynthesis. This reaction introduces a second double bond into the aromatic ring system. The polypeptide is Chorismate synthase (Chlamydia trachomatis serovar D (strain ATCC VR-885 / DSM 19411 / UW-3/Cx)).